Here is a 244-residue protein sequence, read N- to C-terminus: Eukaryotic translation initiation factor 6 (244 aa).

Phosphoserine; by CK1 is present on residues serine 174 and serine 175.

The protein belongs to the eIF-6 family. In terms of assembly, monomer. Associates with the 60S ribosomal subunit. In terms of processing, phosphorylation at Ser-174 and Ser-175 promotes nuclear export.

It localises to the cytoplasm. Its subcellular location is the nucleus. The protein localises to the nucleolus. In terms of biological role, binds to the 60S ribosomal subunit and prevents its association with the 40S ribosomal subunit to form the 80S initiation complex in the cytoplasm. Is also involved in ribosome biogenesis. Associates with pre-60S subunits in the nucleus and is involved in its nuclear export. In Schizosaccharomyces pombe (strain 972 / ATCC 24843) (Fission yeast), this protein is Eukaryotic translation initiation factor 6 (tif6).